We begin with the raw amino-acid sequence, 287 residues long: MKNILLCTDGSDFAQQSYPYAAWLASKLGGNIKVLYVTDIRAQKAVESVNLSGSIGLGTSEELLKQLVDLEHTKAKLNHQKAKLVLATAKNTLQQAGIESVQVMHKTGFLLDCLEDLKGDFDVIILGKRGETAKFAQGHLGANMERIIRSIPKPCLVTPKQFQTITKVLFAYDGSASCQKILQFLAGSSLLADLPLHIVTVGKTNQDPQAIANLGTAEKVLEKAGFKLEVELLVGHAEEAIVRYQEDNAIDLLLMGAHGHSRIRHLVIGSTTAQVLRKTSIPVLTFR.

Belongs to the universal stress protein A family.

This chain is Universal stress protein Slr1230, found in Synechocystis sp. (strain ATCC 27184 / PCC 6803 / Kazusa).